The primary structure comprises 427 residues: Trigger factor (427 aa).

A PPIase FKBP-type domain is found at 163-248; it reads GDTVVIDFVG…VHEVKSKEVP (86 aa).

Belongs to the FKBP-type PPIase family. Tig subfamily.

The protein resides in the cytoplasm. It catalyses the reaction [protein]-peptidylproline (omega=180) = [protein]-peptidylproline (omega=0). In terms of biological role, involved in protein export. Acts as a chaperone by maintaining the newly synthesized protein in an open conformation. Functions as a peptidyl-prolyl cis-trans isomerase. The chain is Trigger factor from Streptococcus uberis (strain ATCC BAA-854 / 0140J).